A 390-amino-acid polypeptide reads, in one-letter code: S-adenosylmethionine synthase 4 (390 aa).

Residue E9 coordinates Mg(2+). H15 is an ATP binding site. E43 is a K(+) binding site. L-methionine is bound by residues E56 and Q99. ATP is bound by residues D167–K169, S235–F238, D246, R252–K253, A269, K273, and K277. D246 is an L-methionine binding site. K277 is a binding site for L-methionine.

This sequence belongs to the AdoMet synthase family. As to quaternary structure, homotetramer. Mn(2+) serves as cofactor. The cofactor is Mg(2+). Co(2+) is required as a cofactor. It depends on K(+) as a cofactor. As to expression, mostly expressed in flowers, seedpods and roots, and, to a lower extent, in stems and leaves.

It localises to the cytoplasm. The catalysed reaction is L-methionine + ATP + H2O = S-adenosyl-L-methionine + phosphate + diphosphate. It functions in the pathway amino-acid biosynthesis; S-adenosyl-L-methionine biosynthesis; S-adenosyl-L-methionine from L-methionine: step 1/1. Its function is as follows. Catalyzes the formation of S-adenosylmethionine from methionine and ATP. The reaction comprises two steps that are both catalyzed by the same enzyme: formation of S-adenosylmethionine (AdoMet) and triphosphate, and subsequent hydrolysis of the triphosphate. This chain is S-adenosylmethionine synthase 4 (MSAMS4), found in Brassica juncea (Indian mustard).